The sequence spans 63 residues: Large ribosomal subunit protein uL29 (63 aa).

This sequence belongs to the universal ribosomal protein uL29 family.

This Stutzerimonas stutzeri (strain A1501) (Pseudomonas stutzeri) protein is Large ribosomal subunit protein uL29.